The sequence spans 134 residues: Profilin-3 (134 aa).

Cysteines 13 and 118 form a disulfide. Residues 84-100 (AVIRGKKGSGGITIKKT) carry the Involved in PIP2 interaction motif. At Thr-114 the chain carries Phosphothreonine.

Belongs to the profilin family. As to quaternary structure, occurs in many kinds of cells as a complex with monomeric actin in a 1:1 ratio. Phosphorylated by MAP kinases.

The protein resides in the cytoplasm. It localises to the cytoskeleton. Functionally, binds to actin and affects the structure of the cytoskeleton. At high concentrations, profilin prevents the polymerization of actin, whereas it enhances it at low concentrations. The polypeptide is Profilin-3 (Olea europaea (Common olive)).